Consider the following 400-residue polypeptide: GDNF family receptor alpha-3 (400 aa).

An N-terminal signal peptide occupies residues 1–31 (MVRPLNPRPLPPVVLMLLLLLPPSPLPLAAG). Cysteines 51 and 57 form a disulfide. 2 N-linked (GlcNAc...) asparagine glycosylation sites follow: asparagine 95 and asparagine 148. Cystine bridges form between cysteine 162–cysteine 218, cysteine 169–cysteine 175, cysteine 186–cysteine 196, cysteine 191–cysteine 239, cysteine 220–cysteine 227, cysteine 248–cysteine 316, cysteine 255–cysteine 261, cysteine 272–cysteine 288, cysteine 281–cysteine 340, and cysteine 318–cysteine 328. An N-linked (GlcNAc...) asparagine glycan is attached at asparagine 309. A lipid anchor (GPI-anchor amidated asparagine) is attached at asparagine 374. Residues 375 to 400 (PAVRPQPWVPSLFSCTLPLILLLSLW) constitute a propeptide, removed in mature form.

This sequence belongs to the GDNFR family. As to quaternary structure, interacts with ARTN ligand and RET: forms a 2:2:2 ternary complex composed of ARTN ligand, GFRA3 and RET receptor. Interacts with SORL1. In terms of processing, N-glycosylated. In terms of tissue distribution, widely expressed in adult and fetus which exhibit a similar pattern. Essentially not expressed in the central nervous system, but highly expressed in several sensory and sympathetic ganglia of the peripheral nervous system. Moderate expression in many non-neuronal tissues, particularly those of the digestive and urogenital systems, but high expression in stomach and appendix. Several types of glandular tissues show low expression. Very low or no expression detected in the hematopoietic system.

Its subcellular location is the cell membrane. Receptor for artemin (ARTN), a growth factor that supports the survival of sensory and sympathetic peripheral neurons. ARTN-binding leads to autophosphorylation and activation of the RET receptor. This Homo sapiens (Human) protein is GDNF family receptor alpha-3 (GFRA3).